The chain runs to 219 residues: Ribose-5-phosphate isomerase A (219 aa).

Residues 28–31, 81–84, and 94–97 each bind substrate; these read TGST, DGAD, and KGGG. Glutamate 103 (proton acceptor) is an active-site residue. Residue lysine 121 coordinates substrate.

Belongs to the ribose 5-phosphate isomerase family. As to quaternary structure, homodimer.

The enzyme catalyses aldehydo-D-ribose 5-phosphate = D-ribulose 5-phosphate. It participates in carbohydrate degradation; pentose phosphate pathway; D-ribose 5-phosphate from D-ribulose 5-phosphate (non-oxidative stage): step 1/1. Its function is as follows. Catalyzes the reversible conversion of ribose-5-phosphate to ribulose 5-phosphate. The sequence is that of Ribose-5-phosphate isomerase A from Salmonella choleraesuis (strain SC-B67).